The sequence spans 446 residues: FAD-dependent monooxygenase eupB (446 aa).

The chain crosses the membrane as a helical span at residues 10-30 (EPHIAIVGGGIVGVILTLGLL). Residue N33 is glycosylated (N-linked (GlcNAc...) asparagine). FAD-binding residues include E40, A53, and R125. Residues R206 and Y239 contribute to the active site. A glycan (N-linked (GlcNAc...) asparagine) is linked at N243. D322 and A335 together coordinate FAD. N395 carries an N-linked (GlcNAc...) asparagine glycan.

The protein belongs to the paxM FAD-dependent monooxygenase family. FAD serves as cofactor.

The protein localises to the membrane. Its pathway is secondary metabolite biosynthesis; terpenoid biosynthesis. Functionally, FAD-dependent monooxygenase; part of the gene cluster that mediates the biosynthesis of eupenifeldin, a bistropolone meroterpenoid that acts as an antitumor agent. The first step of eupenifeldin biosynthesis is the biosynthesis of 3-methylorcinaldehyde performed by the non-reducing polyketide synthase eupA. Oxidative dearomatization of 3-methylorcinaldehyde likely catalyzed by the FAD-dependent monooxygenase eupB is followed by oxidative ring expansion by the 2-oxoglutarate-dependent dioxygenase eupC to provide the first tropolone metabolite, tropolone stipitaldehyde. In parallel, generation of sesquiterpene alpha-humulene from farnesylpyrophosphate (FPP) is catalyzed by the terpene cyclase eupE. The cytochrome P450 monooxygenase eupD then hydroxylates humulene to humulenol. The putative Diels-Alderase eupF probably catalyzes the formation of the tropolone-humulene skeleton by linking humulenol and the polyketide moiety. The short-chain dehydrogenase/reductase eupG and the flavin-dependent monooxygenase eupH are also essential for eupenifeldin biosynthesis and are likely the additional decorating enzymes of the tropolone-humulene skeleton to produce final eupenifeldin or derivatives. In Phoma sp, this protein is FAD-dependent monooxygenase eupB.